The primary structure comprises 479 residues: ATP synthase subunit beta (479 aa).

168–175 (GGAGVGKT) is an ATP binding site.

It belongs to the ATPase alpha/beta chains family. In terms of assembly, F-type ATPases have 2 components, CF(1) - the catalytic core - and CF(0) - the membrane proton channel. CF(1) has five subunits: alpha(3), beta(3), gamma(1), delta(1), epsilon(1). CF(0) has three main subunits: a(1), b(2) and c(9-12). The alpha and beta chains form an alternating ring which encloses part of the gamma chain. CF(1) is attached to CF(0) by a central stalk formed by the gamma and epsilon chains, while a peripheral stalk is formed by the delta and b chains.

It localises to the cell membrane. The catalysed reaction is ATP + H2O + 4 H(+)(in) = ADP + phosphate + 5 H(+)(out). Functionally, produces ATP from ADP in the presence of a proton gradient across the membrane. The catalytic sites are hosted primarily by the beta subunits. The chain is ATP synthase subunit beta from Frankia casuarinae (strain DSM 45818 / CECT 9043 / HFP020203 / CcI3).